Consider the following 135-residue polypeptide: Small ribosomal subunit protein uS12 (135 aa).

Asp-89 is modified (3-methylthioaspartic acid). The segment at 106–135 (GVKDRKQGRSKYGAKRPKPGQAPAAAGKKK) is disordered. The span at 113–123 (GRSKYGAKRPK) shows a compositional bias: basic residues. Positions 124–135 (PGQAPAAAGKKK) are enriched in low complexity.

The protein belongs to the universal ribosomal protein uS12 family. In terms of assembly, part of the 30S ribosomal subunit. Contacts proteins S8 and S17. May interact with IF1 in the 30S initiation complex.

Functionally, with S4 and S5 plays an important role in translational accuracy. In terms of biological role, interacts with and stabilizes bases of the 16S rRNA that are involved in tRNA selection in the A site and with the mRNA backbone. Located at the interface of the 30S and 50S subunits, it traverses the body of the 30S subunit contacting proteins on the other side and probably holding the rRNA structure together. The combined cluster of proteins S8, S12 and S17 appears to hold together the shoulder and platform of the 30S subunit. This Synechococcus sp. (strain JA-3-3Ab) (Cyanobacteria bacterium Yellowstone A-Prime) protein is Small ribosomal subunit protein uS12.